The chain runs to 79 residues: MAPQTLLPVLVLCVLLLQAQGGYRDKKRMQKTQLSPEIKVCQQQPKLYLCKHLCESHRDCQANNICCSTYCGNVCMSIL.

The signal sequence occupies residues 1–21; sequence MAPQTLLPVLVLCVLLLQAQG. In terms of domain architecture, WAP spans 34–79; the sequence is LSPEIKVCQQQPKLYLCKHLCESHRDCQANNICCSTYCGNVCMSIL. Disulfide bonds link Cys41/Cys67, Cys50/Cys71, Cys54/Cys66, and Cys60/Cys75.

It localises to the secreted. The polypeptide is WAP four-disulfide core domain protein 10A (WFDC10A) (Homo sapiens (Human)).